Here is a 459-residue protein sequence, read N- to C-terminus: uncharacterized protein (459 aa).

Transmembrane regions (helical) follow at residues 25 to 45, 52 to 72, 95 to 115, 123 to 143, 167 to 187, 192 to 212, 249 to 269, 279 to 299, 310 to 330, 332 to 352, 389 to 409, and 420 to 440; these read SYGFGDFGNGFMFDLGQIYLL, AGIPAAMAGGIFLVSKLFAAI, PYLLIGSIVLAVLTVLIFLSP, LIYAYASYMIWGIGYSFVNIP, IGSLGALFITSVAVMPLLVKF, VGYPVVMGLFAALGVFWFYIC, VLMTIFSISAYNIKSAMLVYF, LMAYMNFIIIGSSFLGVVFLP, TAMIGFGISVAADLINFMLPS, VYVFTILASIAFIGISIPNGI, SLSGFLSGIGLGIIGYVPNAV, and ALLLLYPAIALALAMFIIGFL.

Belongs to the sodium:galactoside symporter (TC 2.A.2) family.

The protein localises to the cell membrane. This is an uncharacterized protein from Bacillus subtilis (strain 168).